Here is a 343-residue protein sequence, read N- to C-terminus: Thiamine-phosphate synthase (343 aa).

Positions 1–123 (MQQASPTAIA…GACCKQLRYR (123 aa)) are unknown. The segment at 124-343 (VYALESGLLG…LLTQLSRINP (220 aa)) is thiamine-phosphate synthase. Residues 171-175 (QYRDK) and Asn-203 contribute to the 4-amino-2-methyl-5-(diphosphooxymethyl)pyrimidine site. Mg(2+) contacts are provided by Asp-204 and Asp-223. Ser-242 serves as a coordination point for 4-amino-2-methyl-5-(diphosphooxymethyl)pyrimidine. 268 to 270 (TPT) lines the 2-[(2R,5Z)-2-carboxy-4-methylthiazol-5(2H)-ylidene]ethyl phosphate pocket. Residue Lys-271 participates in 4-amino-2-methyl-5-(diphosphooxymethyl)pyrimidine binding. Residue Gly-298 coordinates 2-[(2R,5Z)-2-carboxy-4-methylthiazol-5(2H)-ylidene]ethyl phosphate.

This sequence belongs to the thiamine-phosphate synthase family. It depends on Mg(2+) as a cofactor.

It catalyses the reaction 2-[(2R,5Z)-2-carboxy-4-methylthiazol-5(2H)-ylidene]ethyl phosphate + 4-amino-2-methyl-5-(diphosphooxymethyl)pyrimidine + 2 H(+) = thiamine phosphate + CO2 + diphosphate. The catalysed reaction is 2-(2-carboxy-4-methylthiazol-5-yl)ethyl phosphate + 4-amino-2-methyl-5-(diphosphooxymethyl)pyrimidine + 2 H(+) = thiamine phosphate + CO2 + diphosphate. It carries out the reaction 4-methyl-5-(2-phosphooxyethyl)-thiazole + 4-amino-2-methyl-5-(diphosphooxymethyl)pyrimidine + H(+) = thiamine phosphate + diphosphate. Its pathway is cofactor biosynthesis; thiamine diphosphate biosynthesis; thiamine phosphate from 4-amino-2-methyl-5-diphosphomethylpyrimidine and 4-methyl-5-(2-phosphoethyl)-thiazole: step 1/1. In terms of biological role, condenses 4-methyl-5-(beta-hydroxyethyl)thiazole monophosphate (THZ-P) and 2-methyl-4-amino-5-hydroxymethyl pyrimidine pyrophosphate (HMP-PP) to form thiamine monophosphate (TMP). This Synechocystis sp. (strain ATCC 27184 / PCC 6803 / Kazusa) protein is Thiamine-phosphate synthase.